Reading from the N-terminus, the 151-residue chain is Probable cGMP 3',5'-cyclic phosphodiesterase subunit delta (151 aa).

This sequence belongs to the PDE6D/unc-119 family. Interacts with Pde6.

It is found in the nucleus. The protein localises to the cytoplasm. This chain is Probable cGMP 3',5'-cyclic phosphodiesterase subunit delta, found in Drosophila virilis (Fruit fly).